The primary structure comprises 679 residues: MISASRAAAARLVGTAASRSPAAARPQDGWNGLSHEAFRFVSRRDYASEAIKGAVVGIDLGTTNSCVAVMEGKQAKVLENAEGARTTPSVVAFTADGERLVGMPAKRQAVTNPNNTFYATKRLIGRRYDDPEVQKDTKNVPFKIVRASNGDAWVEAHGKLYSPSQIGAFVLMKMKETAENYLGHTAKNAVITVPAYFNDSQRQATKDAGQISGLNVLRVINEPTAAALAYGLDKSEDKVIAVYDLGGGTFDISILEIQKGVFEVKSTNGDTFLGGEDFDQALLRHIVKEFKRETGVDLTKDNMALQRVREAAEKAKCELSSSVQTDINLPYLTMDASGPKHLNMKLTRAQFEGIVTDLIKRTIAPCQKAMQDAEVSKSDIGEVILVGGMTRMPKVQQTVQDLFGRAPSKAVNPDEAVAIGAAIQGGVLAGDVTDVLLLDVTPLSLGIETLGGVFTKLINRNTTIPTKKSQVFSTAADGQTQVEIKVCQGEREMAGDNKLLGQFTLIGIPPAPRGVPQIEVTFDIDANGIVHVSAKDKGTGREQQIVIQSSGGLSKDDIENMVKNAEKYAEEDRRKKERVEAVNMAEGIIHDTETKMEEFKDQLPADECNKLKEEISKMRALLAGKDSETGENIRQAASSLQQASLKLFEMAYKKMASEREGSGSSGTGEQKEDQKEEKQ.

The N-terminal 46 residues, 1–46 (MISASRAAAARLVGTAASRSPAAARPQDGWNGLSHEAFRFVSRRDY), are a transit peptide targeting the mitochondrion. The interaction with NFS1 stretch occupies residues 1 to 432 (MISASRAAAA…IQGGVLAGDV (432 aa)). The ADP site is built by threonine 63 and asparagine 64. The segment at 63–431 (TNSCVAVMEG…AIQGGVLAGD (369 aa)) is nucleotide-binding domain (NBD). Residue lysine 76 is modified to N6-acetyllysine. Threonine 87 bears the Phosphothreonine mark. N6-acetyllysine; alternate is present on residues lysine 135 and lysine 138. N6-succinyllysine; alternate is present on residues lysine 135 and lysine 138. Lysine 143 carries the N6-acetyllysine modification. The residue at position 206 (lysine 206) is an N6-acetyllysine; alternate. Lysine 206 bears the N6-succinyllysine; alternate mark. The residue at position 206 (lysine 206) is an N6-malonyllysine; alternate. N6-acetyllysine is present on residues lysine 234 and lysine 288. An N6-acetyllysine; alternate modification is found at lysine 300. At lysine 300 the chain carries N6-succinyllysine; alternate. Residues glutamate 313, lysine 316, and serine 320 each coordinate ADP. An N6-acetyllysine; alternate modification is found at lysine 360. At lysine 360 the chain carries N6-succinyllysine; alternate. Position 368 is an N6-succinyllysine (lysine 368). ADP-binding residues include glycine 388 and arginine 391. At lysine 394 the chain carries N6-succinyllysine. Serine 408 is subject to Phosphoserine. The segment at 432 to 441 (VTDVLLLDVT) is interdomain linker. Residues 432–679 (VTDVLLLDVT…QKEDQKEEKQ (248 aa)) form an interaction with FXN and ISCU region. Residues 442–679 (PLSLGIETLG…QKEDQKEEKQ (238 aa)) are substrate-binding domain (SBD). Arginine 513 bears the Omega-N-methylarginine mark. An N6-acetyllysine; alternate mark is found at lysine 567 and lysine 600. N6-succinyllysine; alternate is present on residues lysine 567 and lysine 600. At lysine 610 the chain carries N6-succinyllysine. Residue lysine 612 is modified to N6-acetyllysine. Lysine 646 is subject to N6-acetyllysine; alternate. Lysine 646 is modified (N6-succinyllysine; alternate). A disordered region spans residues 656–679 (ASEREGSGSSGTGEQKEDQKEEKQ). Residues 669 to 679 (EQKEDQKEEKQ) show a composition bias toward basic and acidic residues.

The protein belongs to the heat shock protein 70 family. Interacts strongly with the intermediate form of FXN and weakly with its mature form. Interacts with HSCB. Associates with the mitochondrial contact site and cristae organizing system (MICOS) complex, composed of at least MICOS10/MIC10, CHCHD3/MIC19, CHCHD6/MIC25, APOOL/MIC27, IMMT/MIC60, APOO/MIC23/MIC26 and QIL1/MIC13. This complex was also known under the names MINOS or MitOS complex. The MICOS complex associates with mitochondrial outer membrane proteins SAMM50, MTX1, MTX2 and DNAJC11, mitochondrial inner membrane protein TMEM11 and with HSPA9. Interacts with DNLZ, the interaction is required to prevent self-aggregation. Interacts with TESPA1. Interacts with PDPN. Interacts with NFU1, NFS1 and ISCU. Interacts with TP53; the interaction promotes TP53 degradation. Interacts (via SBD domain) with UBXN2A; the interaction with UBXN2A inhibits HSPA9/MOT-2 interaction with and degradation of TP53, thereby promotes TP53 translocation to the nucleus. Interacts with ITPR1 AND VDAC1; this interaction couples ITPR1 to VDAC1. Component of the TIM23 mitochondrial inner membrane pre-sequence translocase complex.

It localises to the mitochondrion. Its subcellular location is the nucleus. The protein localises to the nucleolus. The protein resides in the cytoplasm. It is found in the mitochondrion matrix. It carries out the reaction ATP + H2O = ADP + phosphate + H(+). The chaperone activity is regulated by ATP-induced allosteric coupling of the nucleotide-binding (NBD) and substrate-binding (SBD) domains. ATP binding in the NBD leads to a conformational change in the NBD, which is transferred through the interdomain linker (IDL) to the substrate-binding domain (SBD). This elicits a reduced substrate affinity and a faster substrate exchange rate. Upon hydrolysis of ATP to ADP, the protein undergoes a conformational change that increases its affinity for substrate proteins. It cycles through repeated phases of ATP hydrolysis and nucleotide exchange, facilitating repeated cycles of substrate binding and release. Functions in collaboration with co-chaperones. Functions with the co-chaperone, DNLZ, to maintain solubility and regulate ATP hydrolysis. Nucleotide exchange factors, GRPEL1 and GRPEL2, accelerate nucleotide exchange. Mitochondrial chaperone that plays a key role in mitochondrial protein import, folding, and assembly. Plays an essential role in the protein quality control system, the correct folding of proteins, the re-folding of misfolded proteins, and the targeting of proteins for subsequent degradation. These processes are achieved through cycles of ATP binding, ATP hydrolysis, and ADP release, mediated by co-chaperones. In mitochondria, it associates with the TIM (translocase of the inner membrane) protein complex to assist in the import and folding of mitochondrial proteins. Plays an important role in mitochondrial iron-sulfur cluster (ISC) biogenesis. Interacts with and stabilizes ISC cluster assembly proteins FXN, NFU1, NFS1 and ISCU. Regulates erythropoiesis via stabilization of ISC assembly. Regulates mitochondrial calcium-dependent apoptosis by coupling two calcium channels, ITPR1 and VDAC1, at the mitochondria-associated endoplasmic reticulum (ER) membrane to facilitate calcium transport from the ER lumen to the mitochondria intermembrane space, providing calcium for the downstream calcium channel MCU, which releases it into the mitochondrial matrix. Although primarily located in the mitochondria, it is also found in other cellular compartments. In the cytosol, it associates with proteins involved in signaling, apoptosis, or senescence. It may play a role in cell cycle regulation via its interaction with and promotion of degradation of TP53. May play a role in the control of cell proliferation and cellular aging. Protects against reactive oxygen species (ROS). Extracellular HSPA9 plays a cytoprotective role by preventing cell lysis following immune attack by the membrane attack complex by disrupting formation of the complex. The protein is Stress-70 protein, mitochondrial of Mus musculus (Mouse).